The following is a 196-amino-acid chain: Glycerol-3-phosphate acyltransferase (196 aa).

The next 5 helical transmembrane spans lie at 1-21 (MIIL…GYLT), 53-73 (AITA…GSLL), 78-98 (GALV…FLKF), 112-132 (IMTS…VMLI), and 152-172 (LLFG…VMIF).

It belongs to the PlsY family. As to quaternary structure, probably interacts with PlsX.

Its subcellular location is the cell membrane. It catalyses the reaction an acyl phosphate + sn-glycerol 3-phosphate = a 1-acyl-sn-glycero-3-phosphate + phosphate. The protein operates within lipid metabolism; phospholipid metabolism. Functionally, catalyzes the transfer of an acyl group from acyl-phosphate (acyl-PO(4)) to glycerol-3-phosphate (G3P) to form lysophosphatidic acid (LPA). This enzyme utilizes acyl-phosphate as fatty acyl donor, but not acyl-CoA or acyl-ACP. The polypeptide is Glycerol-3-phosphate acyltransferase (Carboxydothermus hydrogenoformans (strain ATCC BAA-161 / DSM 6008 / Z-2901)).